Here is a 648-residue protein sequence, read N- to C-terminus: Biosynthetic arginine decarboxylase (648 aa).

K109 carries the N6-(pyridoxal phosphate)lysine modification. 291–301 (IDVGGGLGIDF) provides a ligand contact to substrate.

This sequence belongs to the Orn/Lys/Arg decarboxylase class-II family. SpeA subfamily. Requires Mg(2+) as cofactor. Pyridoxal 5'-phosphate serves as cofactor.

The catalysed reaction is L-arginine + H(+) = agmatine + CO2. Its pathway is amine and polyamine biosynthesis; agmatine biosynthesis; agmatine from L-arginine: step 1/1. In terms of biological role, catalyzes the biosynthesis of agmatine from arginine. This Prochlorococcus marinus (strain MIT 9515) protein is Biosynthetic arginine decarboxylase.